A 302-amino-acid polypeptide reads, in one-letter code: N-acetylmuramic acid 6-phosphate etherase (302 aa).

In terms of domain architecture, SIS spans 58–221; it reads IGEAFLNGGR…STGAMVKTGK (164 aa). Glu86 functions as the Proton donor in the catalytic mechanism. Residue Glu117 is part of the active site.

The protein belongs to the GCKR-like family. MurNAc-6-P etherase subfamily. In terms of assembly, homodimer.

It catalyses the reaction N-acetyl-D-muramate 6-phosphate + H2O = N-acetyl-D-glucosamine 6-phosphate + (R)-lactate. It functions in the pathway amino-sugar metabolism; N-acetylmuramate degradation. Functionally, specifically catalyzes the cleavage of the D-lactyl ether substituent of MurNAc 6-phosphate, producing GlcNAc 6-phosphate and D-lactate. The chain is N-acetylmuramic acid 6-phosphate etherase from Clostridium botulinum (strain Hall / ATCC 3502 / NCTC 13319 / Type A).